Here is an 831-residue protein sequence, read N- to C-terminus: DNA replication licensing factor MCM6 (831 aa).

Residues 155 to 182 (CLDCGSVIKNVEQQFKYTQPTICVSPTC) form a C4-type zinc finger. Positions 258 to 278 (GERAECRRDSSQQKSSTAGHE) are disordered. Residues 259 to 268 (ERAECRRDSS) are compositionally biased toward basic and acidic residues. The MCM domain maps to 345 to 551 (YFNKLVGSMA…VTDYHIAHHI (207 aa)). 395-402 (GDPSCAKS) is an ATP binding site. The Arginine finger signature appears at 527–530 (SRFD). Positions 666 to 705 (SEYQDANGDNMDDTDDIENPVDGEEDQQNGAAEPASATAD) are disordered. Acidic residues predominate over residues 675–692 (NMDDTDDIENPVDGEEDQ).

Belongs to the MCM family. Component of the minichromosome maintenance (MCM) complex, a heterotetramer composed of MCM2, MCM3, MCM4, MCM5, MCM6 and MCM7. Interacts with ETG1. Expressed in shoot apex and flower buds.

Its subcellular location is the nucleus. It catalyses the reaction ATP + H2O = ADP + phosphate + H(+). In terms of biological role, probable component of the MCM2-7 complex (MCM complex) that may function as a DNA helicase and which is essential to undergo a single round of replication initiation and elongation per cell cycle in eukaryotic cells. This is DNA replication licensing factor MCM6 (MCM6) from Arabidopsis thaliana (Mouse-ear cress).